A 148-amino-acid polypeptide reads, in one-letter code: Large ribosomal subunit protein uL15A (148 aa).

Basic residues-rich tracts occupy residues methionine 1–glycine 13 and arginine 21–glycine 31. The interval methionine 1–glycine 36 is disordered.

Belongs to the universal ribosomal protein uL15 family. As to quaternary structure, component of the large ribosomal subunit (LSU). Mature yeast ribosomes consist of a small (40S) and a large (60S) subunit. The 40S small subunit contains 1 molecule of ribosomal RNA (18S rRNA) and at least 33 different proteins. The large 60S subunit contains 3 rRNA molecules (25S, 5.8S and 5S rRNA) and at least 46 different proteins.

It is found in the cytoplasm. In terms of biological role, component of the ribosome, a large ribonucleoprotein complex responsible for the synthesis of proteins in the cell. The small ribosomal subunit (SSU) binds messenger RNAs (mRNAs) and translates the encoded message by selecting cognate aminoacyl-transfer RNA (tRNA) molecules. The large subunit (LSU) contains the ribosomal catalytic site termed the peptidyl transferase center (PTC), which catalyzes the formation of peptide bonds, thereby polymerizing the amino acids delivered by tRNAs into a polypeptide chain. The nascent polypeptides leave the ribosome through a tunnel in the LSU and interact with protein factors that function in enzymatic processing, targeting, and the membrane insertion of nascent chains at the exit of the ribosomal tunnel. The protein is Large ribosomal subunit protein uL15A (rpl2802) of Schizosaccharomyces pombe (strain 972 / ATCC 24843) (Fission yeast).